The chain runs to 65 residues: Probable tautomerase RSp1151 (65 aa).

Pro-2 acts as the Proton acceptor; via imino nitrogen in catalysis.

It belongs to the 4-oxalocrotonate tautomerase family.

In Ralstonia nicotianae (strain ATCC BAA-1114 / GMI1000) (Ralstonia solanacearum), this protein is Probable tautomerase RSp1151.